The primary structure comprises 150 residues: Cytochrome c oxidase subunit 5A, mitochondrial (150 aa).

The N-terminal 41 residues, 1-41 (MLGAALRRCAVAAAARAGPRGLLHSAPTPGPAAAIQSVRCY), are a transit peptide targeting the mitochondrion. The SIFI-degron motif lies at 2 to 17 (LGAALRRCAVAAAARA). Lys87 and Lys113 each carry N6-acetyllysine. Position 141 is a phosphothreonine (Thr141).

Belongs to the cytochrome c oxidase subunit 5A family. Component of the cytochrome c oxidase (complex IV, CIV), a multisubunit enzyme composed of 14 subunits. The complex is composed of a catalytic core of 3 subunits MT-CO1, MT-CO2 and MT-CO3, encoded in the mitochondrial DNA, and 11 supernumerary subunits COX4I, COX5A, COX5B, COX6A, COX6B, COX6C, COX7A, COX7B, COX7C, COX8 and NDUFA4, which are encoded in the nuclear genome. The complex exists as a monomer or a dimer and forms supercomplexes (SCs) in the inner mitochondrial membrane with NADH-ubiquinone oxidoreductase (complex I, CI) and ubiquinol-cytochrome c oxidoreductase (cytochrome b-c1 complex, complex III, CIII), resulting in different assemblies (supercomplex SCI(1)III(2)IV(1) and megacomplex MCI(2)III(2)IV(2)). Interacts with AFG1L. Interacts with RAB5IF. Post-translationally, in response to mitochondrial stress, the precursor protein is ubiquitinated by the SIFI complex in the cytoplasm before mitochondrial import, leading to its degradation. Within the SIFI complex, UBR4 initiates ubiquitin chain that are further elongated or branched by KCMF1.

Its subcellular location is the mitochondrion inner membrane. The protein operates within energy metabolism; oxidative phosphorylation. Its function is as follows. Component of the cytochrome c oxidase, the last enzyme in the mitochondrial electron transport chain which drives oxidative phosphorylation. The respiratory chain contains 3 multisubunit complexes succinate dehydrogenase (complex II, CII), ubiquinol-cytochrome c oxidoreductase (cytochrome b-c1 complex, complex III, CIII) and cytochrome c oxidase (complex IV, CIV), that cooperate to transfer electrons derived from NADH and succinate to molecular oxygen, creating an electrochemical gradient over the inner membrane that drives transmembrane transport and the ATP synthase. Cytochrome c oxidase is the component of the respiratory chain that catalyzes the reduction of oxygen to water. Electrons originating from reduced cytochrome c in the intermembrane space (IMS) are transferred via the dinuclear copper A center (CU(A)) of subunit 2 and heme A of subunit 1 to the active site in subunit 1, a binuclear center (BNC) formed by heme A3 and copper B (CU(B)). The BNC reduces molecular oxygen to 2 water molecules using 4 electrons from cytochrome c in the IMS and 4 protons from the mitochondrial matrix. The sequence is that of Cytochrome c oxidase subunit 5A, mitochondrial (COX5A) from Plecturocebus donacophilus (Bolivian gray titi monkey).